Reading from the N-terminus, the 384-residue chain is Urea transporter 1 (384 aa).

5 helical membrane-spanning segments follow: residues 61-81 (ISQVVFVSNPISGILILAGLL), 85-105 (PWWALCGCVGTVVSTLTALLL), 111-131 (AIAAGLQGYNATLVGILMAVF), 138-158 (FWWLIFPVSAMSMTCPVFSSA), and 168-188 (LPVFTLPFNMALSLYLSATGH). N-linked (GlcNAc...) asparagine glycosylation is present at asparagine 206. Transmembrane regions (helical) follow at residues 250–270 (LMCLHAAIGSLLGVIAGLSLA), 279–299 (GLWGFNSSLACIAIGGMFMAL), 305–325 (LLALACALFTAYFGACMTHLM), and 327–347 (AVHLPACTWSFCLATLLFLLL).

Belongs to the urea transporter family. As to quaternary structure, homotrimer; each subunit contains a pore through which urea permeates. Identified in a complex with STOM. Expressed in brain, spleen, kidney, testis and lung, with highest levels in brain.

The protein localises to the cell membrane. It localises to the basolateral cell membrane. The catalysed reaction is urea(in) = urea(out). Its function is as follows. Mediates the transport of urea driven by a concentration gradient across the cell membrane. Mediates the transport of urea across the cell membranes of erythrocytes and the renal inner medullary collecting duct which is critical to the urinary concentrating mechanism. Facilitates water transport in erythrocytes. The polypeptide is Urea transporter 1 (Slc14a1) (Rattus norvegicus (Rat)).